Here is a 205-residue protein sequence, read N- to C-terminus: MSQDQKPKVLEVSNLENQDAKWTSLKKIRWQDEKGKIRFWEMAERTTRSEANVDAVAILAIVPIDGSPHVLCQKQFRPPIGKFCIEIPAGLVDSKESCEDAAIRELREETGYVGTVMDSTTVMYNDPGLTNANLKIILADIDMSKPENQNPQQQLDDGEYIENFPIKLSSLQEELFSLEKKGFAIDVRLSTFALGLHAGLKYLSS.

The 139-residue stretch at 51–189 folds into the Nudix hydrolase domain; sequence ANVDAVAILA…KKGFAIDVRL (139 aa). The short motif at 90 to 111 is the Nudix box element; that stretch reads GLVDSKESCEDAAIRELREETG.

This sequence belongs to the Nudix hydrolase family.

The protein resides in the cytoplasm. Its subcellular location is the nucleus. This is an uncharacterized protein from Schizosaccharomyces pombe (strain 972 / ATCC 24843) (Fission yeast).